The primary structure comprises 719 residues: Homeobox protein SIX5 (719 aa).

Low complexity-rich tracts occupy residues 1 to 22 and 31 to 65; these read MATS…AAAT and QLLQ…GPGS. 2 disordered regions span residues 1–73 and 241–287; these read MATS…VTEV and WFKN…VASM. A DNA-binding region (homeobox) is located at residues 194–253; the sequence is GEETVYCFKERSRAALKACYRGNRYPTPDEKRRLATLTGLSLTQVSNWFKNRRQRDRTGT. Basic and acidic residues predominate over residues 272 to 282; the sequence is ESSRSPEDLER.

Belongs to the SIX/Sine oculis homeobox family. As to quaternary structure, probably binds DNA dimer. Interacts with EYA3, and probably EYA1 and EYA2.

The protein resides in the nucleus. Functionally, transcription factor that is thought to be involved in regulation of organogenesis. May be involved in determination and maintenance of retina formation. Binds a 5'-GGTGTCAG-3' motif present in the ARE regulatory element of ATP1A1. Binds a 5'-TCA[AG][AG]TTNC-3' motif present in the MEF3 element in the myogenin promoter, and in the IGFBP5 promoter. Thought to be regulated by association with Dach and Eya proteins, and seems to be coactivated by EYA1, EYA2 and EYA3. The chain is Homeobox protein SIX5 (Six5) from Mus musculus (Mouse).